Here is a 779-residue protein sequence, read N- to C-terminus: Protein zer-1 homolog (779 aa).

N-acetylalanine is present on Ala2. LRR repeat units follow at residues Ser226–Leu245, His246–Arg281, and Leu291–Glu315. ARM repeat units follow at residues Arg440–Ile480, Asp524–Asp569, Thr571–Glu613, Lys615–Phe656, and Pro727–Asn769.

Belongs to the zyg-11 family. Interacts with the ELOC-ELOB/Elongin BC complex. Part of an E3 ubiquitin ligase complex including ZER1, CUL2 and Elongin BC.

Functionally, serves as substrate adapter subunit in the E3 ubiquitin ligase complex ZYG11B-CUL2-Elongin BC. Acts redudantly with ZYG11B to target substrates bearing N-terminal glycine degrons for proteasomal degradation. Involved in the clearance of proteolytic fragments generated by caspase cleavage during apoptosis since N-terminal glycine degrons are strongly enriched at caspase cleavage sites. Also important in the quality control of protein N-myristoylation in which N-terminal glycine degrons are conditionally exposed after a failure of N-myristoylation. This Mus musculus (Mouse) protein is Protein zer-1 homolog.